The chain runs to 190 residues: Elongation factor P-like protein (190 aa).

Belongs to the elongation factor P family.

The protein is Elongation factor P-like protein of Shigella dysenteriae serotype 1 (strain Sd197).